Here is a 684-residue protein sequence, read N- to C-terminus: U4/U6 small nuclear ribonucleoprotein Prp3 (684 aa).

A PWI domain is found at Met1–Arg87. Residues Gly73–Gly107 are compositionally biased toward basic and acidic residues. Disordered stretches follow at residues Gly73–Lys109 and Phe162–Ile183. Polar residues predominate over residues Pro170–Ile183.

Component of the precatalytic spliceosome (spliceosome B complex). Component of the U4/U6-U5 tri-snRNP complex, a building block of the precatalytic spliceosome (spliceosome B complex). The U4/U6-U5 tri-snRNP complex is composed of the U4, U6 and U5 snRNAs and at least PRPF3, PRPF4, PRPF6, PRPF8, PRPF31, SNRNP200, TXNL4A, SNRNP40, SNRPB, SNRPD1, SNRPD2, SNRPD3, SNRPE, SNRPF, SNRPG, DDX23, CD2BP2, PPIH, SNU13, EFTUD2, SART1 and USP39, plus LSM2, LSM3, LSM4, LSM5, LSM6, LSM7 and LSM8.

The protein resides in the nucleus. It localises to the nucleus speckle. Plays a role in pre-mRNA splicing as component of the U4/U6-U5 tri-snRNP complex that is involved in spliceosome assembly, and as component of the precatalytic spliceosome (spliceosome B complex). This chain is U4/U6 small nuclear ribonucleoprotein Prp3 (PRPF3), found in Gallus gallus (Chicken).